Reading from the N-terminus, the 96-residue chain is Aspartyl/glutamyl-tRNA(Asn/Gln) amidotransferase subunit C (96 aa).

It belongs to the GatC family. In terms of assembly, heterotrimer of A, B and C subunits.

It carries out the reaction L-glutamyl-tRNA(Gln) + L-glutamine + ATP + H2O = L-glutaminyl-tRNA(Gln) + L-glutamate + ADP + phosphate + H(+). The catalysed reaction is L-aspartyl-tRNA(Asn) + L-glutamine + ATP + H2O = L-asparaginyl-tRNA(Asn) + L-glutamate + ADP + phosphate + 2 H(+). Functionally, allows the formation of correctly charged Asn-tRNA(Asn) or Gln-tRNA(Gln) through the transamidation of misacylated Asp-tRNA(Asn) or Glu-tRNA(Gln) in organisms which lack either or both of asparaginyl-tRNA or glutaminyl-tRNA synthetases. The reaction takes place in the presence of glutamine and ATP through an activated phospho-Asp-tRNA(Asn) or phospho-Glu-tRNA(Gln). The polypeptide is Aspartyl/glutamyl-tRNA(Asn/Gln) amidotransferase subunit C (Chloroflexus aurantiacus (strain ATCC 29366 / DSM 635 / J-10-fl)).